Consider the following 163-residue polypeptide: Small heat shock protein C1 (163 aa).

Positions 55–163 constitute a sHSP domain; the sequence is TFYESSSLKS…EQDSREITIN (109 aa).

It belongs to the small heat shock protein (HSP20) family.

The chain is Small heat shock protein C1 (hspC1) from Rickettsia prowazekii (strain Madrid E).